The sequence spans 342 residues: Probable dual-specificity RNA methyltransferase RlmN (342 aa).

Glu91 (proton acceptor) is an active-site residue. Residues 97–326 (YKFGNTACVS…CTVRRELGSD (230 aa)) form the Radical SAM core domain. Cys104 and Cys331 are disulfide-bonded. Cys111, Cys115, and Cys118 together coordinate [4Fe-4S] cluster. S-adenosyl-L-methionine is bound by residues 157–158 (GE), Ser189, 212–214 (SLH), and Asn288. The S-methylcysteine intermediate role is filled by Cys331.

Belongs to the radical SAM superfamily. RlmN family. Requires [4Fe-4S] cluster as cofactor.

The protein resides in the cytoplasm. The catalysed reaction is adenosine(2503) in 23S rRNA + 2 reduced [2Fe-2S]-[ferredoxin] + 2 S-adenosyl-L-methionine = 2-methyladenosine(2503) in 23S rRNA + 5'-deoxyadenosine + L-methionine + 2 oxidized [2Fe-2S]-[ferredoxin] + S-adenosyl-L-homocysteine. The enzyme catalyses adenosine(37) in tRNA + 2 reduced [2Fe-2S]-[ferredoxin] + 2 S-adenosyl-L-methionine = 2-methyladenosine(37) in tRNA + 5'-deoxyadenosine + L-methionine + 2 oxidized [2Fe-2S]-[ferredoxin] + S-adenosyl-L-homocysteine. Its function is as follows. Specifically methylates position 2 of adenine 2503 in 23S rRNA and position 2 of adenine 37 in tRNAs. This chain is Probable dual-specificity RNA methyltransferase RlmN, found in Caldanaerobacter subterraneus subsp. tengcongensis (strain DSM 15242 / JCM 11007 / NBRC 100824 / MB4) (Thermoanaerobacter tengcongensis).